The following is an 80-amino-acid chain: UPF0125 protein PD_1376 (80 aa).

Belongs to the UPF0125 (RnfH) family.

The polypeptide is UPF0125 protein PD_1376 (Xylella fastidiosa (strain Temecula1 / ATCC 700964)).